The sequence spans 292 residues: Acetyl-coenzyme A carboxylase carboxyl transferase subunit beta (292 aa).

The CoA carboxyltransferase N-terminal domain occupies 29–292 (LWVKCSECGQ…HGVKDLMGAN (264 aa)). Cysteine 33, cysteine 36, cysteine 52, and cysteine 55 together coordinate Zn(2+). Residues 33–55 (CSECGQVAYRKDLISNFNVCSNC) form a C4-type zinc finger.

The protein belongs to the AccD/PCCB family. As to quaternary structure, acetyl-CoA carboxylase is a heterohexamer composed of biotin carboxyl carrier protein (AccB), biotin carboxylase (AccC) and two subunits each of ACCase subunit alpha (AccA) and ACCase subunit beta (AccD). The cofactor is Zn(2+).

It localises to the cytoplasm. It carries out the reaction N(6)-carboxybiotinyl-L-lysyl-[protein] + acetyl-CoA = N(6)-biotinyl-L-lysyl-[protein] + malonyl-CoA. Its pathway is lipid metabolism; malonyl-CoA biosynthesis; malonyl-CoA from acetyl-CoA: step 1/1. In terms of biological role, component of the acetyl coenzyme A carboxylase (ACC) complex. Biotin carboxylase (BC) catalyzes the carboxylation of biotin on its carrier protein (BCCP) and then the CO(2) group is transferred by the transcarboxylase to acetyl-CoA to form malonyl-CoA. This is Acetyl-coenzyme A carboxylase carboxyl transferase subunit beta from Prochlorococcus marinus (strain MIT 9515).